Here is a 246-residue protein sequence, read N- to C-terminus: 23S rRNA (guanosine-2'-O-)-methyltransferase RlmB (246 aa).

Residues glycine 196, isoleucine 216, and leucine 225 each coordinate S-adenosyl-L-methionine.

It belongs to the class IV-like SAM-binding methyltransferase superfamily. RNA methyltransferase TrmH family. RlmB subfamily. As to quaternary structure, homodimer.

It localises to the cytoplasm. It carries out the reaction guanosine(2251) in 23S rRNA + S-adenosyl-L-methionine = 2'-O-methylguanosine(2251) in 23S rRNA + S-adenosyl-L-homocysteine + H(+). In terms of biological role, specifically methylates the ribose of guanosine 2251 in 23S rRNA. The sequence is that of 23S rRNA (guanosine-2'-O-)-methyltransferase RlmB from Yersinia pestis.